Here is a 629-residue protein sequence, read N- to C-terminus: Probable indole-3-acetic acid-amido synthetase GH3.4 (629 aa).

Belongs to the IAA-amido conjugating enzyme family. Expressed in flowers.

In terms of biological role, may catalyze the synthesis of indole-3-acetic acid (IAA)-amino acid conjugates, providing a mechanism for the plant to cope with the presence of excess auxin. This chain is Probable indole-3-acetic acid-amido synthetase GH3.4 (GH3.4), found in Oryza sativa subsp. japonica (Rice).